The sequence spans 478 residues: Protein nucleotidyltransferase YdiU (478 aa).

ATP is bound by residues glycine 84, glycine 86, arginine 87, lysine 107, aspartate 119, glycine 120, arginine 170, and arginine 177. Catalysis depends on aspartate 246, which acts as the Proton acceptor. Mg(2+) is bound by residues asparagine 247 and aspartate 256. Aspartate 256 provides a ligand contact to ATP.

Belongs to the SELO family. It depends on Mg(2+) as a cofactor. The cofactor is Mn(2+).

The enzyme catalyses L-seryl-[protein] + ATP = 3-O-(5'-adenylyl)-L-seryl-[protein] + diphosphate. The catalysed reaction is L-threonyl-[protein] + ATP = 3-O-(5'-adenylyl)-L-threonyl-[protein] + diphosphate. It catalyses the reaction L-tyrosyl-[protein] + ATP = O-(5'-adenylyl)-L-tyrosyl-[protein] + diphosphate. It carries out the reaction L-histidyl-[protein] + UTP = N(tele)-(5'-uridylyl)-L-histidyl-[protein] + diphosphate. The enzyme catalyses L-seryl-[protein] + UTP = O-(5'-uridylyl)-L-seryl-[protein] + diphosphate. The catalysed reaction is L-tyrosyl-[protein] + UTP = O-(5'-uridylyl)-L-tyrosyl-[protein] + diphosphate. Its function is as follows. Nucleotidyltransferase involved in the post-translational modification of proteins. It can catalyze the addition of adenosine monophosphate (AMP) or uridine monophosphate (UMP) to a protein, resulting in modifications known as AMPylation and UMPylation. The polypeptide is Protein nucleotidyltransferase YdiU (Shigella sonnei (strain Ss046)).